Reading from the N-terminus, the 575-residue chain is Glycine--tRNA ligase (575 aa).

Substrate is bound by residues arginine 96 and glutamate 162. ATP contacts are provided by residues 194–196, 204–209, 327–328, and 450–453; these read RNE, IRLREF, EC, and GIDR. 209 to 213 is a substrate binding site; that stretch reads FTQAE. Residue 446 to 450 coordinates substrate; sequence EPSYG.

The protein belongs to the class-II aminoacyl-tRNA synthetase family.

The protein localises to the cytoplasm. It carries out the reaction tRNA(Gly) + glycine + ATP = glycyl-tRNA(Gly) + AMP + diphosphate. Functionally, catalyzes the attachment of glycine to tRNA(Gly). In Methanococcus maripaludis (strain C5 / ATCC BAA-1333), this protein is Glycine--tRNA ligase.